The following is a 65-amino-acid chain: Small ribosomal subunit protein bS21 (65 aa).

A compositionally biased stretch (basic and acidic residues) spans 33–42 (RRREHYEKPS). Positions 33–65 (RRREHYEKPSVKRKRKEAARLRKLQKMAREANN) are disordered. Over residues 43–58 (VKRKRKEAARLRKLQK) the composition is skewed to basic residues.

This sequence belongs to the bacterial ribosomal protein bS21 family.

This is Small ribosomal subunit protein bS21 from Herpetosiphon aurantiacus (strain ATCC 23779 / DSM 785 / 114-95).